The primary structure comprises 290 residues: Arylamine N-acetyltransferase 2 (290 aa).

Cysteine 68 (acyl-thioester intermediate) is an active-site residue. Residues serine 103 and glycine 104 each coordinate CoA. 106-107 (IH) lines the substrate pocket. Catalysis depends on residues histidine 107 and aspartate 122. Tyrosine 208 is a CoA binding site.

The protein belongs to the arylamine N-acetyltransferase family.

It is found in the cytoplasm. The catalysed reaction is an arylamine + acetyl-CoA = an N-acetylarylamine + CoA. It carries out the reaction an N-hydroxyarylamine + acetyl-CoA = an N-acetoxyarylamine + CoA. Its function is as follows. Catalyzes the N- or O-acetylation of various arylamine and heterocyclic amine substrates. Participates in the detoxification of a plethora of hydrazine and arylamine drugs. This chain is Arylamine N-acetyltransferase 2 (Nat2), found in Rattus norvegicus (Rat).